Reading from the N-terminus, the 426-residue chain is Serine--tRNA ligase (426 aa).

An L-serine-binding site is contributed by 230–232; it reads TAE. Position 261–263 (261–263) interacts with ATP; it reads RSE. Position 284 (Glu-284) interacts with L-serine. 348–351 is a binding site for ATP; the sequence is EISS. Ser-384 is an L-serine binding site.

Belongs to the class-II aminoacyl-tRNA synthetase family. Type-1 seryl-tRNA synthetase subfamily. As to quaternary structure, homodimer. The tRNA molecule binds across the dimer.

It localises to the cytoplasm. It catalyses the reaction tRNA(Ser) + L-serine + ATP = L-seryl-tRNA(Ser) + AMP + diphosphate + H(+). The catalysed reaction is tRNA(Sec) + L-serine + ATP = L-seryl-tRNA(Sec) + AMP + diphosphate + H(+). Its pathway is aminoacyl-tRNA biosynthesis; selenocysteinyl-tRNA(Sec) biosynthesis; L-seryl-tRNA(Sec) from L-serine and tRNA(Sec): step 1/1. Functionally, catalyzes the attachment of serine to tRNA(Ser). Is also able to aminoacylate tRNA(Sec) with serine, to form the misacylated tRNA L-seryl-tRNA(Sec), which will be further converted into selenocysteinyl-tRNA(Sec). This chain is Serine--tRNA ligase, found in Novosphingobium aromaticivorans (strain ATCC 700278 / DSM 12444 / CCUG 56034 / CIP 105152 / NBRC 16084 / F199).